Reading from the N-terminus, the 298-residue chain is Homoserine kinase (298 aa).

An ATP-binding site is contributed by Pro83–Ser93.

Belongs to the GHMP kinase family. Homoserine kinase subfamily.

The protein resides in the cytoplasm. It carries out the reaction L-homoserine + ATP = O-phospho-L-homoserine + ADP + H(+). Its pathway is amino-acid biosynthesis; L-threonine biosynthesis; L-threonine from L-aspartate: step 4/5. Catalyzes the ATP-dependent phosphorylation of L-homoserine to L-homoserine phosphate. The polypeptide is Homoserine kinase (Clostridium botulinum (strain Alaska E43 / Type E3)).